Reading from the N-terminus, the 153-residue chain is 6,7-dimethyl-8-ribityllumazine synthase (153 aa).

5-amino-6-(D-ribitylamino)uracil is bound by residues Phe21, 55–57, and 79–81; these read AFE and TVI. 84–85 contributes to the (2S)-2-hydroxy-3-oxobutyl phosphate binding site; the sequence is AT. His87 functions as the Proton donor in the catalytic mechanism. Position 112 (Phe112) interacts with 5-amino-6-(D-ribitylamino)uracil. Arg126 contacts (2S)-2-hydroxy-3-oxobutyl phosphate.

This sequence belongs to the DMRL synthase family. As to quaternary structure, forms an icosahedral capsid composed of 60 subunits, arranged as a dodecamer of pentamers.

It carries out the reaction (2S)-2-hydroxy-3-oxobutyl phosphate + 5-amino-6-(D-ribitylamino)uracil = 6,7-dimethyl-8-(1-D-ribityl)lumazine + phosphate + 2 H2O + H(+). Its pathway is cofactor biosynthesis; riboflavin biosynthesis; riboflavin from 2-hydroxy-3-oxobutyl phosphate and 5-amino-6-(D-ribitylamino)uracil: step 1/2. Catalyzes the formation of 6,7-dimethyl-8-ribityllumazine by condensation of 5-amino-6-(D-ribitylamino)uracil with 3,4-dihydroxy-2-butanone 4-phosphate. This is the penultimate step in the biosynthesis of riboflavin. The polypeptide is 6,7-dimethyl-8-ribityllumazine synthase (Bacillus cereus (strain AH187)).